Consider the following 108-residue polypeptide: Transmembrane protein 141 (108 aa).

Helical transmembrane passes span 32–52 (MKGV…QMFI) and 58–78 (YPLQ…SYGV).

The protein belongs to the TMEM141 family.

The protein localises to the membrane. This is Transmembrane protein 141 (TMEM141) from Homo sapiens (Human).